A 109-amino-acid chain; its full sequence is Nucleoid-associated protein Shal_1591 (109 aa).

A disordered region spans residues 87 to 109 (NQKEKMAEVTGGMQLPPGMKMPF).

Belongs to the YbaB/EbfC family. Homodimer.

The protein resides in the cytoplasm. It is found in the nucleoid. Binds to DNA and alters its conformation. May be involved in regulation of gene expression, nucleoid organization and DNA protection. The sequence is that of Nucleoid-associated protein Shal_1591 from Shewanella halifaxensis (strain HAW-EB4).